An 872-amino-acid chain; its full sequence is Valine--tRNA ligase (872 aa).

The 'HIGH' region motif lies at 46-56; it reads PNVTGKLHIGH. The 'KMSKS' region motif lies at 523–527; sequence KMSKS. Lys526 contributes to the ATP binding site. The stretch at 796 to 872 forms a coiled coil; the sequence is IEIANDSFIN…KDKLKELTND (77 aa).

The protein belongs to the class-I aminoacyl-tRNA synthetase family. ValS type 1 subfamily. As to quaternary structure, monomer.

It localises to the cytoplasm. It catalyses the reaction tRNA(Val) + L-valine + ATP = L-valyl-tRNA(Val) + AMP + diphosphate. In terms of biological role, catalyzes the attachment of valine to tRNA(Val). As ValRS can inadvertently accommodate and process structurally similar amino acids such as threonine, to avoid such errors, it has a 'posttransfer' editing activity that hydrolyzes mischarged Thr-tRNA(Val) in a tRNA-dependent manner. In Mycoplasma mycoides subsp. mycoides SC (strain CCUG 32753 / NCTC 10114 / PG1), this protein is Valine--tRNA ligase.